The chain runs to 876 residues: Leucine--tRNA ligase (876 aa).

A 'HIGH' region motif is present at residues 43 to 53; sequence PYPSGRIHIGH. The short motif at 632–636 is the 'KMSKS' region element; that stretch reads KMSKS. Lys635 lines the ATP pocket.

It belongs to the class-I aminoacyl-tRNA synthetase family.

It is found in the cytoplasm. The enzyme catalyses tRNA(Leu) + L-leucine + ATP = L-leucyl-tRNA(Leu) + AMP + diphosphate. The chain is Leucine--tRNA ligase from Allorhizobium ampelinum (strain ATCC BAA-846 / DSM 112012 / S4) (Agrobacterium vitis (strain S4)).